Reading from the N-terminus, the 639-residue chain is Phosphomethylpyrimidine synthase (639 aa).

The disordered stretch occupies residues 49 to 71; the sequence is DTPTDFGGEQNRPVRVYDTSGPY. Substrate contacts are provided by residues N231, M260, Y289, H325, 345 to 347, 386 to 389, and E425; these read SRG and DGLR. H429 lines the Zn(2+) pocket. Y452 contacts substrate. H493 is a binding site for Zn(2+). [4Fe-4S] cluster-binding residues include C573, C576, and C581.

Belongs to the ThiC family. Homodimer. [4Fe-4S] cluster serves as cofactor.

The enzyme catalyses 5-amino-1-(5-phospho-beta-D-ribosyl)imidazole + S-adenosyl-L-methionine = 4-amino-2-methyl-5-(phosphooxymethyl)pyrimidine + CO + 5'-deoxyadenosine + formate + L-methionine + 3 H(+). It functions in the pathway cofactor biosynthesis; thiamine diphosphate biosynthesis. Catalyzes the synthesis of the hydroxymethylpyrimidine phosphate (HMP-P) moiety of thiamine from aminoimidazole ribotide (AIR) in a radical S-adenosyl-L-methionine (SAM)-dependent reaction. The chain is Phosphomethylpyrimidine synthase from Teredinibacter turnerae (strain ATCC 39867 / T7901).